Here is a 944-residue protein sequence, read N- to C-terminus: Isoleucine--tRNA ligase (944 aa).

Positions 58–68 match the 'HIGH' region motif; it reads PYANGQIHIGH. Glu568 provides a ligand contact to L-isoleucyl-5'-AMP. The short motif at 609-613 is the 'KMSKS' region element; that stretch reads KMSKS. Lys612 is an ATP binding site. The Zn(2+) site is built by Cys907, Cys910, Cys927, and Cys930.

This sequence belongs to the class-I aminoacyl-tRNA synthetase family. IleS type 1 subfamily. Monomer. Zn(2+) is required as a cofactor.

The protein resides in the cytoplasm. The catalysed reaction is tRNA(Ile) + L-isoleucine + ATP = L-isoleucyl-tRNA(Ile) + AMP + diphosphate. Catalyzes the attachment of isoleucine to tRNA(Ile). As IleRS can inadvertently accommodate and process structurally similar amino acids such as valine, to avoid such errors it has two additional distinct tRNA(Ile)-dependent editing activities. One activity is designated as 'pretransfer' editing and involves the hydrolysis of activated Val-AMP. The other activity is designated 'posttransfer' editing and involves deacylation of mischarged Val-tRNA(Ile). This Idiomarina loihiensis (strain ATCC BAA-735 / DSM 15497 / L2-TR) protein is Isoleucine--tRNA ligase.